The sequence spans 345 residues: Cell division control protein 2 homolog 2 (345 aa).

Residues 1 to 44 (MQVQVQEGQTACDGSLRPLPSAGPASFVPRSLRPAPLRGTSTPD) form a disordered region. A Protein kinase domain is found at 46 to 328 (YSRIEKVGEG…AYEALQHSYF (283 aa)). Residues 52 to 60 (VGEGSYGIV) and Lys-75 each bind ATP. Ser-56 bears the Phosphoserine mark. A Phosphotyrosine modification is found at Tyr-57. Asp-168 serves as the catalytic Proton acceptor.

This sequence belongs to the protein kinase superfamily. CMGC Ser/Thr protein kinase family. CDC2/CDKX subfamily. In terms of assembly, forms a stable but non-covalent complex with a regulatory subunit and with a cyclin.

It carries out the reaction L-seryl-[protein] + ATP = O-phospho-L-seryl-[protein] + ADP + H(+). The enzyme catalyses L-threonyl-[protein] + ATP = O-phospho-L-threonyl-[protein] + ADP + H(+). Phosphorylation at Ser-56 or Tyr-57 inactivates the enzyme. Its function is as follows. Probably involved in the control of the cell cycle. This chain is Cell division control protein 2 homolog 2 (CRK2), found in Trypanosoma brucei brucei.